The following is a 554-amino-acid chain: GPI alpha-1,2-mannosyltransferase 3 (554 aa).

A glycan (N-linked (GlcNAc...) asparagine) is linked at N26. Transmembrane regions (helical) follow at residues 63 to 83 (LLLFTIALRILNCFLVQTSFV), 136 to 156 (VQLLIWIPRLAQALLSAVADV), 192 to 212 (LTNTMETVLTIIALFYYPLEG), 224 to 244 (LVALAFIIRPTAVILWTPLLF), 255 to 275 (DLILHHFLPVGFVTLSLSLMI), 315 to 335 (GFPVILGTHLPFFIHGCYLAP), 340 to 360 (ILLVTVLWTLLVYSMLSHKEF), 362 to 382 (FIYPVLPFCMVFCGYSLTHLK), and 387 to 407 (PALSFLFLSNLFLALYTGLVH). Residue N427 is glycosylated (N-linked (GlcNAc...) asparagine).

Belongs to the glycosyltransferase 22 family. PIGB subfamily.

The protein localises to the endoplasmic reticulum membrane. It functions in the pathway glycolipid biosynthesis; glycosylphosphatidylinositol-anchor biosynthesis. Its function is as follows. Alpha-1,2-mannosyltransferase that catalyzes the transfer of the third mannose, via an alpha-1,2 bond, from a dolichol-phosphate-mannose (Dol-P-Man) to an alpha-D-Man-(1-&gt;6)-2-PEtn-alpha-D-Man-(1-&gt;4)-alpha-D-GlcN-(1-&gt;6)-(1-radyl,2-acyl-sn-glycero-3-phospho)-2-acyl-inositol intermediate to generate an alpha-D-Man-(1-&gt;2)-alpha-D-Man-(1-&gt;6)-2-PEtn-alpha-D-Man-(1-&gt;4)-alpha-D-GlcN-(1-&gt;6)-(1-radyl,2-acyl-sn-glycero-3-phospho)-2-acyl-inositol (also termed H6) and participates in the nineth step of the glycosylphosphatidylinositol-anchor biosynthesis. May also add the third mannose to an alpha-D-Man-(1-&gt;6)-alpha-D-Man-(1-&gt;4)-alpha-D-GlcN-(1-&gt;6)-(1-radyl,2-acyl-sn-glycero-3-phospho)-2-acyl-inositol (also termed H3) intermediate generating an alpha-D-Man-(1-&gt;2)-alpha-D-Man-(1-&gt;6)-alpha-D-Man-(1-&gt;4)-alpha-D-GlcN-(1-&gt;6)-(1-radyl,2-acyl-sn-glycero-3-phospho)-2-acyl-inositol (also termed H4). In Homo sapiens (Human), this protein is GPI alpha-1,2-mannosyltransferase 3.